We begin with the raw amino-acid sequence, 464 residues long: F-box/WD repeat-containing protein 12 (464 aa).

In terms of domain architecture, F-box spans 1–45; it reads MEIRLPDLALKRIFSFLDLFGLLQVSQVNKHWNRIADSDYLWRSL. 8 WD repeats span residues 89 to 132, 136 to 174, 178 to 217, 222 to 263, 270 to 315, 320 to 367, 370 to 407, and 416 to 461; these read YKVT…CAWD, GTMI…KVWN, RDAL…YTFT, RDVS…FLTE, EGSV…ITFD, KTGG…LLFS, GFLL…YMWE, and RSCC…VMYS.

In terms of assembly, interacts with SKP1. Interacts with CUL1. Interacts with IL22RA1. As to expression, ubiquitously expressed.

It participates in protein modification; protein ubiquitination. Its function is as follows. Substrate-recognition component of the SCF (SKP1-CUL1-F-box protein)-type E3 ubiquitin ligase complex. Promotes degradation of interleukin-22 receptor subunit IL22RA1 in resting and IL22-stimulated conditions by facilitating its ubiquitination. Functions as a cell growth suppressor. In Homo sapiens (Human), this protein is F-box/WD repeat-containing protein 12 (FBXW12).